The primary structure comprises 419 residues: Acyl-coenzyme A thioesterase 6 (419 aa).

Active-site charge relay system residues include Ser-232, Asp-324, and His-358. Positions 417–419 match the Peroxisome targeting signal motif; sequence SKL.

Belongs to the C/M/P thioester hydrolase family. In terms of tissue distribution, highly expressed in white adipose tissue. Detected at lower levels in kidney, liver, brown adipose tissue and brain.

Its subcellular location is the peroxisome. The catalysed reaction is pristanoyl-CoA + H2O = 2,6,10,14-tetramethylpentadecanoate + CoA + H(+). It carries out the reaction phytanoyl-CoA + H2O = 3,7,11,15-tetramethylhexadecanoate + CoA + H(+). Its pathway is lipid metabolism; fatty acid metabolism. Its function is as follows. Catalyzes the hydrolysis of acyl-CoAs into free fatty acids and coenzyme A (CoASH), regulating their respective intracellular levels. Catalyzes the hydrolysis of phytanoyl-CoA and pristanoyl-CoA, two methyl-branched fatty acids derived from phytol, that enter the body via the diet. In Mus musculus (Mouse), this protein is Acyl-coenzyme A thioesterase 6.